A 315-amino-acid chain; its full sequence is Cytochrome bo(3) ubiquinol oxidase subunit 2 (315 aa).

The first 24 residues, 1–24, serve as a signal peptide directing secretion; sequence MRLRKYNKSLGWLSLFAGTVLLSG. Cys25 is lipidated: N-palmitoyl cysteine. A lipid anchor (S-diacylglycerol cysteine) is attached at Cys25. Over 25-50 the chain is Periplasmic; that stretch reads CNSALLDPKGQIGLEQRSLILTAFGL. A helical membrane pass occupies residues 51–68; it reads MLIVVIPAILMAVGFAWK. Residues 69–92 are Cytoplasmic-facing; it reads YRASNKDAKYSPNWSHSNKVEAVV. Residues 93-111 form a helical membrane-spanning segment; sequence WTVPILIIIFLAVLTWKTT. At 112–315 the chain is on the periplasmic side; that stretch reads HALEPSKPLA…MDMSHAESAH (204 aa). The tract at residues 288–315 is disordered; the sequence is MDMTQPEGEHSAHEGMEGMDMSHAESAH. A compositionally biased stretch (basic and acidic residues) spans 294–315; the sequence is EGEHSAHEGMEGMDMSHAESAH.

It belongs to the cytochrome c oxidase subunit 2 family. Heterooctamer of two A chains, two B chains, two C chains and two D chains.

The protein resides in the cell inner membrane. Functionally, cytochrome bo(3) ubiquinol terminal oxidase is the component of the aerobic respiratory chain of E.coli that predominates when cells are grown at high aeration. Has proton pump activity across the membrane in addition to electron transfer, pumping 2 protons/electron. The sequence is that of Cytochrome bo(3) ubiquinol oxidase subunit 2 (cyoA) from Escherichia coli O6:H1 (strain CFT073 / ATCC 700928 / UPEC).